We begin with the raw amino-acid sequence, 36 residues long: Histone H1-like protein EM5 (36 aa).

Residues 1-36 (MITAAVGALKERGGSSRQAILKYIQANFKVQANPAA) enclose the H15 domain.

This sequence belongs to the histone H1/H5 family. Sperm.

It localises to the nucleus. The protein localises to the chromosome. This chain is Histone H1-like protein EM5, found in Ensis minor (Razor shell).